Reading from the N-terminus, the 98-residue chain is DNA-binding protein HU (98 aa).

Belongs to the bacterial histone-like protein family. As to quaternary structure, homodimer.

Histone-like DNA-binding protein which is capable of wrapping DNA to stabilize it, and thus to prevent its denaturation under extreme environmental conditions. This chain is DNA-binding protein HU (hup), found in Campylobacter jejuni subsp. jejuni serotype O:2 (strain ATCC 700819 / NCTC 11168).